Reading from the N-terminus, the 435-residue chain is ATP-dependent RNA helicase SUB2 (435 aa).

Residues 1–40 form a disordered region; the sequence is MSHEGQEELLDYSDSEEIAVPTTTAPSAAAGEGANDKEAD. A compositionally biased stretch (acidic residues) spans 7–17; the sequence is EELLDYSDSEE. The segment covering 19-33 has biased composition (low complexity); the sequence is AVPTTTAPSAAAGEG. A Q motif motif is present at residues 51–79; it reads TGFRDFLLKPELLRAIGDCGFEHPSEVQQ. One can recognise a Helicase ATP-binding domain in the interval 82-257; that stretch reads IPQSILGTDV…KKFMQNPLEI (176 aa). 95-102 contributes to the ATP binding site; sequence AKSGLGKT. The DECD box signature appears at 204 to 207; that stretch reads DECD. In terms of domain architecture, Helicase C-terminal spans 269–430; sequence GLQQYYIKLD…EFPEEGVDPS (162 aa).

The protein belongs to the DEAD box helicase family. DECD subfamily.

It is found in the nucleus. The catalysed reaction is ATP + H2O = ADP + phosphate + H(+). Its function is as follows. ATP-binding RNA helicase involved in transcription elongation and required for the export of mRNA out of the nucleus. SUB2 also plays a role in pre-mRNA splicing and spliceosome assembly. May be involved in rDNA and telomeric silencing, and maintenance of genome integrity. The sequence is that of ATP-dependent RNA helicase SUB2 (SUB2) from Debaryomyces hansenii (strain ATCC 36239 / CBS 767 / BCRC 21394 / JCM 1990 / NBRC 0083 / IGC 2968) (Yeast).